A 186-amino-acid polypeptide reads, in one-letter code: uncharacterized protein (186 aa).

The protein belongs to the geranylgeranyl reductase family. ChlP subfamily.

This is an uncharacterized protein from Methanosarcina barkeri.